A 730-amino-acid polypeptide reads, in one-letter code: Dual function macrocyclase-peptidase POPB (730 aa).

Active-site charge relay system residues include Ser-577, Asp-661, and His-698.

Belongs to the peptidase S9A family. In terms of assembly, monomer. As to expression, expressed in the pileus (cap) and lamellae where it colocalizes with amanitin.

The catalysed reaction is Hydrolysis of Pro-|-Xaa &gt;&gt; Ala-|-Xaa in oligopeptides.. Dual function macrocyclase-peptidase involved in the biosynthesis of the highly toxic amanitin toxin family of macrocycles. Cleaves peptide bonds on the C-terminal side of prolyl residues. The enzyme first removes 10 residues from the N-terminus of a 35-residue substrate. Conformational trapping of the 25 amino-acid peptide forces the enzyme to release this intermediate rather than proceed to macrocyclization. The enzyme rebinds the 25 amino-acid peptide in a different conformation and catalyzes macrocyclization of the N-terminal eight residues. In Amanita bisporigera (Destroying angel), this protein is Dual function macrocyclase-peptidase POPB.